The chain runs to 556 residues: Dihydroxy-acid dehydratase (556 aa).

C47 lines the [2Fe-2S] cluster pocket. D79 provides a ligand contact to Mg(2+). A [2Fe-2S] cluster-binding site is contributed by C120. Mg(2+)-binding residues include D121 and K122. An N6-carboxylysine modification is found at K122. Position 192 (C192) interacts with [2Fe-2S] cluster. Mg(2+) is bound at residue E444. S470 acts as the Proton acceptor in catalysis.

The protein belongs to the IlvD/Edd family. Homodimer. Requires [2Fe-2S] cluster as cofactor. It depends on Mg(2+) as a cofactor.

It catalyses the reaction (2R)-2,3-dihydroxy-3-methylbutanoate = 3-methyl-2-oxobutanoate + H2O. The enzyme catalyses (2R,3R)-2,3-dihydroxy-3-methylpentanoate = (S)-3-methyl-2-oxopentanoate + H2O. The protein operates within amino-acid biosynthesis; L-isoleucine biosynthesis; L-isoleucine from 2-oxobutanoate: step 3/4. Its pathway is amino-acid biosynthesis; L-valine biosynthesis; L-valine from pyruvate: step 3/4. Functions in the biosynthesis of branched-chain amino acids. Catalyzes the dehydration of (2R,3R)-2,3-dihydroxy-3-methylpentanoate (2,3-dihydroxy-3-methylvalerate) into 2-oxo-3-methylpentanoate (2-oxo-3-methylvalerate) and of (2R)-2,3-dihydroxy-3-methylbutanoate (2,3-dihydroxyisovalerate) into 2-oxo-3-methylbutanoate (2-oxoisovalerate), the penultimate precursor to L-isoleucine and L-valine, respectively. In Prochlorococcus marinus (strain MIT 9313), this protein is Dihydroxy-acid dehydratase.